A 30-amino-acid chain; its full sequence is Cyclotide vdif-A (30 aa).

Positions 1–30 (GIPCGESCVFIPCISSVVGCSCKSKVCYRN) form a cross-link, cyclopeptide (Gly-Asn). Cystine bridges form between Cys4/Cys20, Cys8/Cys22, and Cys13/Cys27.

It belongs to the cyclotide family. Bracelet subfamily. This is a cyclic peptide.

In terms of biological role, probably participates in a plant defense mechanism. The protein is Cyclotide vdif-A of Viola diffusa.